We begin with the raw amino-acid sequence, 351 residues long: DNA polymerase IV (351 aa).

One can recognise a UmuC domain in the interval 4–185; it reads IIHVDMDCFF…LPLAKIPGVG (182 aa). Residues Asp8 and Asp103 each coordinate Mg(2+). Residue Glu104 is part of the active site.

The protein belongs to the DNA polymerase type-Y family. As to quaternary structure, monomer. The cofactor is Mg(2+).

The protein resides in the cytoplasm. It catalyses the reaction DNA(n) + a 2'-deoxyribonucleoside 5'-triphosphate = DNA(n+1) + diphosphate. In terms of biological role, poorly processive, error-prone DNA polymerase involved in untargeted mutagenesis. Copies undamaged DNA at stalled replication forks, which arise in vivo from mismatched or misaligned primer ends. These misaligned primers can be extended by PolIV. Exhibits no 3'-5' exonuclease (proofreading) activity. May be involved in translesional synthesis, in conjunction with the beta clamp from PolIII. The protein is DNA polymerase IV of Salmonella arizonae (strain ATCC BAA-731 / CDC346-86 / RSK2980).